Reading from the N-terminus, the 83-residue chain is ATP synthase subunit c (83 aa).

2 consecutive transmembrane segments (helical) span residues isoleucine 10–leucine 30 and methionine 52–phenylalanine 72.

The protein belongs to the ATPase C chain family. In terms of assembly, F-type ATPases have 2 components, F(1) - the catalytic core - and F(0) - the membrane proton channel. F(1) has five subunits: alpha(3), beta(3), gamma(1), delta(1), epsilon(1). F(0) has three main subunits: a(1), b(2) and c(10-14). The alpha and beta chains form an alternating ring which encloses part of the gamma chain. F(1) is attached to F(0) by a central stalk formed by the gamma and epsilon chains, while a peripheral stalk is formed by the delta and b chains.

The protein localises to the cell inner membrane. Its function is as follows. F(1)F(0) ATP synthase produces ATP from ADP in the presence of a proton or sodium gradient. F-type ATPases consist of two structural domains, F(1) containing the extramembraneous catalytic core and F(0) containing the membrane proton channel, linked together by a central stalk and a peripheral stalk. During catalysis, ATP synthesis in the catalytic domain of F(1) is coupled via a rotary mechanism of the central stalk subunits to proton translocation. Key component of the F(0) channel; it plays a direct role in translocation across the membrane. A homomeric c-ring of between 10-14 subunits forms the central stalk rotor element with the F(1) delta and epsilon subunits. This is ATP synthase subunit c from Shewanella loihica (strain ATCC BAA-1088 / PV-4).